The following is a 3179-amino-acid chain: Guanylate cyclase beta (3179 aa).

Residues 1–60 lie on the Cytoplasmic side of the membrane; sequence MKTQTLSLMNINGKRKFLGTNNKIYRKVIINPTSEDDIQKFCRNYFRIYNFSLYNFIRRL. A helical transmembrane segment spans residues 61 to 81; that stretch reads ISFDAILVYSLFLTVYIFSEI. Over 82–88 the chain is Extracellular; it reads NHGETKK. Residues 89–109 traverse the membrane as a helical segment; sequence YLFIDTAISLFFNIILLIVIE. Residues 110-295 are Cytoplasmic-facing; the sequence is SLFELKKLKD…FCIKMNNIVY (186 aa). The chain crosses the membrane as a helical span at residues 296–316; it reads YLIFMYFVFVVLSIVIKTIFF. The Extracellular portion of the chain corresponds to 317 to 328; sequence HKKNSFQNSRDS. A helical transmembrane segment spans residues 329–349; the sequence is FLSMLEDFVGLYILVLPIMMY. Residues 350 to 988 lie on the Cytoplasmic side of the membrane; sequence SEKSLIYIIQ…GRLNRFSLCK (639 aa). Residues 989–1009 form a helical membrane-spanning segment; it reads VFLWIIYLKITVVSFYFFHNF. At 1010 to 1020 the chain is on the extracellular side; sequence DNYFSGSSASS. The chain crosses the membrane as a helical span at residues 1021–1041; sequence ILYTQTTFALLHYFLIIAFSA. Residues 1042–1069 lie on the Cytoplasmic side of the membrane; the sequence is YEIDLPYKFVRRLPYIYQLSRRKYFLNN. The helical transmembrane segment at 1070–1090 threads the bilayer; that stretch reads NIILLTIIEAILISLTSYYIL. Residues 1091 to 1102 lie on the Extracellular side of the membrane; that stretch reads RLNVFHLITHRE. A helical transmembrane segment spans residues 1103 to 1123; the sequence is FTFHIFILNVFITTEKILLLS. At 1124 to 1127 the chain is on the cytoplasmic side; sequence KTWH. A helical membrane pass occupies residues 1128–1148; the sequence is IYFFIMAVLIIGILLIYVNIF. The Extracellular segment spans residues 1149–1168; the sequence is TLVDCIKNGKCEFSLFQMEN. The helical transmembrane segment at 1169-1189 threads the bilayer; that stretch reads IYFWTSLFPILYINFIFDKLM. Residues 1190–1304 lie on the Cytoplasmic side of the membrane; sequence KYIKNRIYPD…YEKGNKLKLR (115 aa). Residues 1305-1325 traverse the membrane as a helical segment; it reads IIVILLFLIYIIIFSSQTIID. The Extracellular segment spans residues 1326–1331; sequence INTKSN. A helical transmembrane segment spans residues 1332 to 1352; that stretch reads IHYITMFYIIYFVLACVLLIY. The Cytoplasmic portion of the chain corresponds to 1353–1360; sequence IRIRNKAT. A helical membrane pass occupies residues 1361–1381; that stretch reads STFFFFLSRFLLICGFCIELY. Over 1382 to 1401 the chain is Extracellular; that stretch reads DNISNDILNVLITYSFTVSY. N-linked (GlcNAc...) asparagine glycosylation occurs at Asn1383. Residues 1402–1422 traverse the membrane as a helical segment; that stretch reads IFFMSFKILEALLVCISILLL. At 1423–1464 the chain is on the cytoplasmic side; sequence TFGVYYEKNKNMIDICTHFCSNPYLSINNLDHMNISCLCKKQ. Residues 1465 to 1485 traverse the membrane as a helical segment; that stretch reads IVIFLISLLSFTLICLSMKYY. The Extracellular segment spans residues 1486-1507; sequence EIFYLKKKFLFRYKQKVNLAKQ. Residues 1508–1528 traverse the membrane as a helical segment; the sequence is IEILHTMLPNFLVEYLLISDP. At 1529 to 2739 the chain is on the cytoplasmic side; it reads KNDGIMVGKN…IINIDLTKKL (1211 aa). A Guanylate cyclase 1 domain is found at 1548–1700; sequence SVIFCDIDDF…DTVNTASRMK (153 aa). 3 disordered regions span residues 2123–2153, 2355–2379, and 2576–2656; these read LHNY…YTSS, SINK…KDKK, and KDSD…HHHS. Residues 2131 to 2142 show a composition bias toward basic residues; that stretch reads NKNKNKKNNKNV. The segment covering 2584-2607 has biased composition (low complexity); sequence NNNKISKNRYNNNNNNNNSNYSNI. Over residues 2614-2645 the composition is skewed to basic residues; that stretch reads HNNKKNHHHNNNKYHHHNNNKYHHHNNNKYHH. Residues 2740 to 2760 form a helical membrane-spanning segment; that stretch reads IIIFIFTEIFLSLCNIIELSF. Topologically, residues 2761 to 2770 are extracellular; it reads YEKKLRYNDS. The N-linked (GlcNAc...) asparagine glycan is linked to Asn2768. The helical transmembrane segment at 2771-2791 threads the bilayer; that stretch reads IVIIWLIRSIYLFIITYIWII. Over 2792–2809 the chain is Cytoplasmic; the sequence is LKTKLKEYKNNSSKMMWT. Residues 2810-2830 form a helical membrane-spanning segment; that stretch reads IFILNIFLCSWGIILIDLSCI. Residues 2831-2842 lie on the Extracellular side of the membrane; the sequence is HYSMLLGNKNER. Residues 2843-2863 form a helical membrane-spanning segment; it reads ALFFMKDASELIICIQLIFIK. At 2864–2870 the chain is on the cytoplasmic side; it reads NMLFKHK. Residues 2871 to 2891 traverse the membrane as a helical segment; sequence FFFFVFFYIFLIYSFSKLFSI. Residues 2892-2895 are Extracellular-facing; the sequence is HTCQ. A helical transmembrane segment spans residues 2896–2916; it reads THICCSIILFISINILYFWYS. At 2917–3179 the chain is on the cytoplasmic side; the sequence is EYLDRIQFLV…KLRQKKGLRS (263 aa). A Guanylate cyclase 2 domain is found at 2968 to 3102; that stretch reads AFLFADIVGF…LDVLIANKIE (135 aa). Mg(2+)-binding residues include Asp2973, Ile2974, and Asp3017.

It in the N-terminal section; belongs to the cation transport ATPase (P-type) (TC 3.A.3) family. Type IV subfamily. In the C-terminal section; belongs to the adenylyl cyclase class-4/guanylyl cyclase family. Mg(2+) is required as a cofactor. It depends on Mn(2+) as a cofactor.

Its subcellular location is the membrane. It carries out the reaction GTP = 3',5'-cyclic GMP + diphosphate. With respect to regulation, basal guanylate activity of the recombinant guanylate cyclase domains 1 and 2 is not modulated by an increase in Ca(2+) levels or by the gametogenesis inducer xanthurenic acid. In terms of biological role, catalyzes the synthesis of the second messenger cGMP from GTP. Regulates cGMP production in gametocytes; however, is dispensable for the initiation of gametogenesis. Does not have adenylate cyclase activity. The protein is Guanylate cyclase beta of Plasmodium falciparum (isolate 3D7).